A 1017-amino-acid polypeptide reads, in one-letter code: Stereoselective keto-reductase af490 (1017 aa).

The segment at 6–138 is N-terminal hotdog fold; it reads NELSGSQVPG…GRLRMTFAGH (133 aa). Positions 6–311 constitute a PKS/mFAS DH domain; that stretch reads NELSGSQVPG…MSPIAPSTEK (306 aa). The tract at residues 8–306 is dehydratase (DH); that stretch reads LSGSQVPGAT…LEGLTMSPIA (299 aa). A C-terminal hotdog fold region spans residues 153 to 311; it reads LRPVSISPFY…MSPIAPSTEK (159 aa). Residues 532–720 are ketoreductase (KR); sequence QIRFLRAPFD…VQGGRLLIPR (189 aa).

It carries out the reaction fumagillol + NADP(+) = 5-dehydrofumagillol + NADPH + H(+). Its pathway is secondary metabolite biosynthesis; terpenoid biosynthesis. In terms of biological role, stereoselective keto-reductase; part of the gene cluster that mediates the biosynthesis of fumagillin, a meroterpenoid that has numerous biological activities including irreversible inhibition of human type 2 methionine aminopeptidase (METAP2). Within the pathway, the keto-reductase af490 acts as a 5-dehydrofumagillol 5-reductase that stereoselectively reduces 5-keto-fumagillol to 5R-hydroxy-seco-sesquiterpene. The pathway begins with the conversion of farnesyl pyrophosphate (FPP) to beta-trans-bergamotene by the membrane-bound beta-trans-bergamotene synthase af520. The multifunctional cytochrome P450 monooxygenase af510 then converts beta-trans-bergamotene into 5-keto-demethoxyfumagillol via several oxydation steps. 5-keto-demethoxyfumagillol is then subjected to successive C-6 hydroxylation and O-methylation by the dioxygenase af480 and O-methyltransferase af390-400, respectively, to yield 5-keto-fumagillol, which is then stereoselectively reduced by the keto-reductase af490 to 5R-hydroxy-seco-sesquiterpene. The next step is the polyketide transferase af380-catalyzed transfer of a dodecapentaenoyl group synthesized by the polyketide synthase af370 onto 5R-hydroxy-seco-sesquiterpene which leads to the production of prefumagillin. Finally, oxidative cleavage by the monooxygenase af470 converts prefumagillin to fumagillin. This Aspergillus fumigatus (strain ATCC MYA-4609 / CBS 101355 / FGSC A1100 / Af293) (Neosartorya fumigata) protein is Stereoselective keto-reductase af490.